Consider the following 232-residue polypeptide: MFSNAFTDKAVMAELVAKMLWEIKAVHFRADEPYRLASGMASPVYIDCRKLVSYPRIRSAVMDFAAATILREAGFEQFDVVAGGETAGIPFAAMLAERLGLPMIYVRKAPKGHGRNAQIEGYMPEGARVLVIEDLTTAGGSMFKFIDAIRAAGGVVEHGIALFYYDIFPEARGNMKSKGVDLHYIATWRNVLAVARELALFDEKTLNEVEAFLNAPLDWSGRNGGVRALAVQ.

Residues arginine 107, lysine 108, lysine 111, histidine 113, and 133 to 141 (EDLTTAGGS) each bind 5-phospho-alpha-D-ribose 1-diphosphate. Orotate is bound at residue threonine 137.

The protein belongs to the purine/pyrimidine phosphoribosyltransferase family. PyrE subfamily. Homodimer. It depends on Mg(2+) as a cofactor.

It catalyses the reaction orotidine 5'-phosphate + diphosphate = orotate + 5-phospho-alpha-D-ribose 1-diphosphate. The protein operates within pyrimidine metabolism; UMP biosynthesis via de novo pathway; UMP from orotate: step 1/2. In terms of biological role, catalyzes the transfer of a ribosyl phosphate group from 5-phosphoribose 1-diphosphate to orotate, leading to the formation of orotidine monophosphate (OMP). In Rhizobium meliloti (strain 1021) (Ensifer meliloti), this protein is Orotate phosphoribosyltransferase.